The sequence spans 240 residues: Ditrans,polycis-undecaprenyl-diphosphate synthase ((2E,6E)-farnesyl-diphosphate specific) (240 aa).

The active site involves Asp-18. Position 18 (Asp-18) interacts with Mg(2+). Substrate-binding positions include 19–22 (GNGR), Trp-23, Arg-31, His-35, and 63–65 (SSE). The active-site Proton acceptor is the Asn-66. Residues Trp-67, Arg-69, Arg-186, and 192 to 194 (RIS) each bind substrate. Glu-205 is a Mg(2+) binding site.

The protein belongs to the UPP synthase family. In terms of assembly, homodimer. The cofactor is Mg(2+).

The enzyme catalyses 8 isopentenyl diphosphate + (2E,6E)-farnesyl diphosphate = di-trans,octa-cis-undecaprenyl diphosphate + 8 diphosphate. In terms of biological role, catalyzes the sequential condensation of isopentenyl diphosphate (IPP) with (2E,6E)-farnesyl diphosphate (E,E-FPP) to yield (2Z,6Z,10Z,14Z,18Z,22Z,26Z,30Z,34E,38E)-undecaprenyl diphosphate (di-trans,octa-cis-UPP). UPP is the precursor of glycosyl carrier lipid in the biosynthesis of bacterial cell wall polysaccharide components such as peptidoglycan and lipopolysaccharide. This is Ditrans,polycis-undecaprenyl-diphosphate synthase ((2E,6E)-farnesyl-diphosphate specific) from Pasteurella multocida (strain Pm70).